The chain runs to 472 residues: MVAVRAPRRKRASATDLYKTCKAAGTCPPDVIPKIEGSTLADKILQWSGLGIFLGGLGIGTGTGSGGRTGYIPLGGGGRPSVVDIGPTRPPIIIEPVGPTEPSIVTLVEESSIIQSGAPIPTFSGGNGFELTTSSATTPAVLDITPSAGTVHVTSTNIQNPLYIEPPIDIPQAGEASGHIFTTTSTAGTHSYEEIPMEVFASTNGTGLEPISSTPIPGIQRVSAPRLYSKAYQQVKVTDPNFIGNPSTFVTFDNPAYEPIDETLTYASSSTVAPDPDFLDIIALHRPALTSRKGTVRYSRLGQKATMKTRSGKQIGATVHYYHDISPIQSFAEHEEIELQPLHTSTHSSAPLFDIYADPDTVPSIHTPRMSYSPTTLPVPRYASNVFSSINTSTTNVTVPLSTSFELPVYSGSDIYTPTSSPTWPSLPPPPTTNLPAIVVHGDNYYLWPYIYLIHKRRKRMPYFFSDGFVAY.

The Nuclear localization signal motif lies at 1–12; that stretch reads MVAVRAPRRKRA. Cys-21 and Cys-27 are disulfide-bonded. The Nuclear localization signal signature appears at 453–461; it reads LIHKRRKRM.

Belongs to the papillomaviridae L2 protein family. As to quaternary structure, interacts with major capsid protein L1. Interacts with E2; this interaction inhibits E2 transcriptional activity but not the DNA replication function E2. Interacts with host GADD45GIP1. Interacts with host HSPA8; this interaction is required for L2 nuclear translocation. Interacts with host importins KPNB2 and KPNB3. Forms a complex with importin alpha2-beta1 heterodimers via interaction with the importin alpha2 adapter. Interacts with host DYNLT1; this interaction is essential for virus intracellular transport during entry. Interacts (via C-terminus) with host retromer subunits VPS35 and VPS29. Post-translationally, highly phosphorylated.

It localises to the virion. Its subcellular location is the host nucleus. The protein resides in the host early endosome. The protein localises to the host Golgi apparatus. Minor protein of the capsid that localizes along the inner surface of the virion, within the central cavities beneath the L1 pentamers. Plays a role in capsid stabilization through interaction with the major capsid protein L1. Once the virion enters the host cell, L2 escorts the genomic DNA into the nucleus by promoting escape from the endosomal compartments and traffic through the host Golgi network. Mechanistically, the C-terminus of L2 possesses a cell-penetrating peptide that protudes from the host endosome, interacts with host cytoplasmic retromer cargo and thereby mediates the capsid delivery to the host trans-Golgi network. Plays a role through its interaction with host dynein in the intracellular microtubule-dependent transport of viral capsid toward the nucleus. Mediates the viral genome import into the nucleus through binding to host importins. Once within the nucleus, L2 localizes viral genomes to host PML bodies in order to activate early gene expression for establishment of infection. Later on, promotes late gene expression by interacting with the viral E2 protein and by inhibiting its transcriptional activation functions. During virion assembly, encapsidates the genome by direct interaction with the viral DNA. In Homo sapiens (Human), this protein is Minor capsid protein L2.